A 92-amino-acid chain; its full sequence is Movement protein (92 aa).

The helical transmembrane segment at 38-58 threads the bilayer; that stretch reads VIALVVILVSVGVFYLAYTLF.

This sequence belongs to the mastrevirus movement protein family. Interacts with the capsid protein (CP). Part of a MP-CP-viral DNA complex.

Its subcellular location is the host membrane. Its function is as follows. Involved in the viral transport within, and between cells. The protein is Movement protein of Phaseolus vulgaris (Kidney bean).